Reading from the N-terminus, the 105-residue chain is Cyclotide vibi-J (105 aa).

A signal peptide spans 1–9 (AAFALPALA). A propeptide spanning residues 10-71 (TSFEKDFITH…KSSNSINALG (62 aa)) is cleaved from the precursor. Residues 72-102 (GTFPCGESCVWIPCISKVIGCACKSKVCYKN) constitute a cross-link (cyclopeptide (Gly-Asn)). 3 disulfide bridges follow: cysteine 76–cysteine 92, cysteine 80–cysteine 94, and cysteine 85–cysteine 99. Positions 103–105 (SLA) are excised as a propeptide.

Post-translationally, this is a cyclic peptide.

Functionally, probably participates in a plant defense mechanism. This chain is Cyclotide vibi-J, found in Viola biflora (Yellow wood violet).